The chain runs to 213 residues: Urease accessory protein UreE (213 aa).

The interval 170-213 (EHHGRSHSHSHSHSHDHDHDHDHDHDHDHQHGPSCSHGHGHGHR) is disordered. The segment covering 182 to 200 (HSHDHDHDHDHDHDHDHQH) has biased composition (basic and acidic residues).

This sequence belongs to the UreE family.

It is found in the cytoplasm. Involved in urease metallocenter assembly. Binds nickel. Probably functions as a nickel donor during metallocenter assembly. The chain is Urease accessory protein UreE from Burkholderia thailandensis (strain ATCC 700388 / DSM 13276 / CCUG 48851 / CIP 106301 / E264).